Consider the following 379-residue polypeptide: UDP-4-amino-4-deoxy-L-arabinose--oxoglutarate aminotransferase (379 aa).

An N6-(pyridoxal phosphate)lysine modification is found at Lys-182.

Belongs to the DegT/DnrJ/EryC1 family. ArnB subfamily. As to quaternary structure, homodimer. Pyridoxal 5'-phosphate serves as cofactor.

It catalyses the reaction UDP-4-amino-4-deoxy-beta-L-arabinose + 2-oxoglutarate = UDP-beta-L-threo-pentopyranos-4-ulose + L-glutamate. It functions in the pathway nucleotide-sugar biosynthesis; UDP-4-deoxy-4-formamido-beta-L-arabinose biosynthesis; UDP-4-deoxy-4-formamido-beta-L-arabinose from UDP-alpha-D-glucuronate: step 2/3. It participates in bacterial outer membrane biogenesis; lipopolysaccharide biosynthesis. Functionally, catalyzes the conversion of UDP-4-keto-arabinose (UDP-Ara4O) to UDP-4-amino-4-deoxy-L-arabinose (UDP-L-Ara4N). The modified arabinose is attached to lipid A and is required for resistance to polymyxin and cationic antimicrobial peptides. The chain is UDP-4-amino-4-deoxy-L-arabinose--oxoglutarate aminotransferase from Escherichia coli O127:H6 (strain E2348/69 / EPEC).